The primary structure comprises 325 residues: GTP 3',8-cyclase (325 aa).

The Radical SAM core domain occupies 4-219; that stretch reads TYQREINYLR…DAISAKLGPL (216 aa). Arg13 is a binding site for GTP. [4Fe-4S] cluster contacts are provided by Cys20 and Cys24. Tyr26 provides a ligand contact to S-adenosyl-L-methionine. A [4Fe-4S] cluster-binding site is contributed by Cys27. A GTP-binding site is contributed by Arg63. Gly67 lines the S-adenosyl-L-methionine pocket. Thr94 serves as a coordination point for GTP. Position 118 (Ser118) interacts with S-adenosyl-L-methionine. A GTP-binding site is contributed by Lys155. Met189 provides a ligand contact to S-adenosyl-L-methionine. [4Fe-4S] cluster contacts are provided by Cys254 and Cys257. 259–261 provides a ligand contact to GTP; that stretch reads RLR. Cys271 contacts [4Fe-4S] cluster.

The protein belongs to the radical SAM superfamily. MoaA family. In terms of assembly, monomer and homodimer. It depends on [4Fe-4S] cluster as a cofactor.

It catalyses the reaction GTP + AH2 + S-adenosyl-L-methionine = (8S)-3',8-cyclo-7,8-dihydroguanosine 5'-triphosphate + 5'-deoxyadenosine + L-methionine + A + H(+). It participates in cofactor biosynthesis; molybdopterin biosynthesis. In terms of biological role, catalyzes the cyclization of GTP to (8S)-3',8-cyclo-7,8-dihydroguanosine 5'-triphosphate. This is GTP 3',8-cyclase from Pelotomaculum thermopropionicum (strain DSM 13744 / JCM 10971 / SI).